A 113-amino-acid chain; its full sequence is UPF0342 protein SMU_782 (113 aa).

The protein belongs to the UPF0342 family.

The sequence is that of UPF0342 protein SMU_782 from Streptococcus mutans serotype c (strain ATCC 700610 / UA159).